Here is a 303-residue protein sequence, read N- to C-terminus: Probable 5-dehydro-4-deoxyglucarate dehydratase (303 aa).

This sequence belongs to the DapA family.

The enzyme catalyses 5-dehydro-4-deoxy-D-glucarate + H(+) = 2,5-dioxopentanoate + CO2 + H2O. It participates in carbohydrate acid metabolism; D-glucarate degradation; 2,5-dioxopentanoate from D-glucarate: step 2/2. This is Probable 5-dehydro-4-deoxyglucarate dehydratase from Pseudomonas syringae pv. syringae (strain B728a).